A 515-amino-acid chain; its full sequence is Leucine-rich repeat transmembrane neuronal protein 2 (515 aa).

The N-terminal stretch at 1–33 (MGLHFKWPLGAPMLAAIYAMSVVLKMLPALGMA) is a signal peptide. Positions 34–61 (CPPKCRCEKLLFYCDSQGFHSVPNATDK) constitute an LRRNT domain. The Extracellular portion of the chain corresponds to 34 to 421 (CPPKCRCEKL…EPDNAIFTQR (388 aa)). N-linked (GlcNAc...) asparagine glycosylation is present at asparagine 57. 10 LRR repeats span residues 63-83 (SLGLSLRHNHITALERDQFAS), 86-107 (QLTWLHLDHNQISTVKEDAFQG), 110-131 (KLKELILSSNKIFYLPNTTFTQ), 134-155 (NLQNLDLSFNQLSSLHPELFYG), 158-179 (KLQTLHLRSNSLRTIPVRLFWD), 182-203 (SLEFLDLSTNRLRSLARNGFAG), 206-227 (KLRELHLEHNQLTKINFAHFLR), 230-251 (SLHTLFLQWNKISNLTCGMDWT), 254-275 (TLEKLDLTGNEIKAIDLTVFET), and 278-299 (NLKILLMDNNKLNSLDSKILNS). Residue asparagine 126 is glycosylated (N-linked (GlcNAc...) asparagine). Asparagine 243 carries an N-linked (GlcNAc...) asparagine glycan. Positions 311 to 362 (NLWECSPRVCALASWLGSFQGRWEHSILCHSPDHTQGEDILDAVHGFQLCWN) constitute an LRRCT domain. Asparagine 362 is a glycosylation site (N-linked (GlcNAc...) asparagine). A helical membrane pass occupies residues 422 to 442 (VITGTMALLFSFFFIIFIVFI). Topologically, residues 443-515 (SRKCCPPTLR…QQLPYKECEV (73 aa)) are cytoplasmic. The Involved in DLG4-binding motif lies at 512–515 (ECEV).

It belongs to the LRRTM family. As to quaternary structure, interacts with DLG4. Interacts with neurexin NRXN1; interaction is mediated by heparan sulfate glycan modification on neurexin. In terms of tissue distribution, expressed in neuronal tissues.

The protein resides in the cell membrane. The protein localises to the postsynaptic cell membrane. Its function is as follows. Involved in the development and maintenance of excitatory synapses in the vertebrate nervous system. Regulates surface expression of AMPA receptors and instructs the development of functional glutamate release sites. Acts as a ligand for the presynaptic receptors NRXN1-A and NRXN1-B. This Mus musculus (Mouse) protein is Leucine-rich repeat transmembrane neuronal protein 2 (Lrrtm2).